A 330-amino-acid polypeptide reads, in one-letter code: Glycerol-3-phosphate dehydrogenase [NAD(P)+] (330 aa).

3 residues coordinate NADPH: W11, R33, and K105. Sn-glycerol 3-phosphate contacts are provided by K105, G133, and S135. An NADPH-binding site is contributed by A137. K188, D241, S251, R252, and N253 together coordinate sn-glycerol 3-phosphate. Residue K188 is the Proton acceptor of the active site. Position 252 (R252) interacts with NADPH. Residues V276 and E278 each contribute to the NADPH site.

It belongs to the NAD-dependent glycerol-3-phosphate dehydrogenase family.

It is found in the cytoplasm. It catalyses the reaction sn-glycerol 3-phosphate + NAD(+) = dihydroxyacetone phosphate + NADH + H(+). It carries out the reaction sn-glycerol 3-phosphate + NADP(+) = dihydroxyacetone phosphate + NADPH + H(+). It functions in the pathway membrane lipid metabolism; glycerophospholipid metabolism. Catalyzes the reduction of the glycolytic intermediate dihydroxyacetone phosphate (DHAP) to sn-glycerol 3-phosphate (G3P), the key precursor for phospholipid synthesis. The chain is Glycerol-3-phosphate dehydrogenase [NAD(P)+] from Acidovorax sp. (strain JS42).